An 87-amino-acid polypeptide reads, in one-letter code: Beta-toxin CsE3 (87 aa).

The signal sequence occupies residues 1–19; sequence MNSLLIIAACLALIGTVWA. Residues 20–85 form the LCN-type CS-alpha/beta domain; the sequence is KEGYIVNYHT…VWPLPKKKCN (66 aa). 4 disulfide bridges follow: C31/C84, C35/C60, C44/C65, and C48/C67. Asparagine amide is present on N85.

This sequence belongs to the long (4 C-C) scorpion toxin superfamily. Sodium channel inhibitor family. Beta subfamily. Expressed by the venom gland.

Its subcellular location is the secreted. Functionally, beta toxins bind voltage-independently at site-4 of sodium channels (Nav) and shift the voltage of activation toward more negative potentials thereby affecting sodium channel activation and promoting spontaneous and repetitive firing. In Centruroides sculpturatus (Arizona bark scorpion), this protein is Beta-toxin CsE3.